Reading from the N-terminus, the 159-residue chain is Eukaryotic translation initiation factor 5A-1 (159 aa).

Residues 1–12 (MSDEEHHFESKA) show a composition bias toward basic and acidic residues. A disordered region spans residues 1–23 (MSDEEHHFESKADAGASKTYPQQ). A Hypusine modification is found at lysine 52.

This sequence belongs to the eIF-5A family. In terms of processing, lys-52 undergoes hypusination, a unique post-translational modification that consists in the addition of a butylamino group from spermidine to lysine side chain, leading to the formation of the unusual amino acid hypusine. eIF-5As are the only known proteins to undergo this modification, which is essential for their function.

In terms of biological role, translation factor that promotes translation elongation and termination, particularly upon ribosome stalling at specific amino acid sequence contexts. Binds between the exit (E) and peptidyl (P) site of the ribosome and promotes rescue of stalled ribosome: specifically required for efficient translation of polyproline-containing peptides as well as other motifs that stall the ribosome. Acts as a ribosome quality control (RQC) cofactor by joining the RQC complex to facilitate peptidyl transfer during CAT tailing step. The protein is Eukaryotic translation initiation factor 5A-1 (EIF-5A1) of Nicotiana plumbaginifolia (Leadwort-leaved tobacco).